Reading from the N-terminus, the 101-residue chain is Aspartyl/glutamyl-tRNA(Asn/Gln) amidotransferase subunit C (101 aa).

Belongs to the GatC family. As to quaternary structure, heterotrimer of A, B and C subunits.

The catalysed reaction is L-glutamyl-tRNA(Gln) + L-glutamine + ATP + H2O = L-glutaminyl-tRNA(Gln) + L-glutamate + ADP + phosphate + H(+). The enzyme catalyses L-aspartyl-tRNA(Asn) + L-glutamine + ATP + H2O = L-asparaginyl-tRNA(Asn) + L-glutamate + ADP + phosphate + 2 H(+). Its function is as follows. Allows the formation of correctly charged Asn-tRNA(Asn) or Gln-tRNA(Gln) through the transamidation of misacylated Asp-tRNA(Asn) or Glu-tRNA(Gln) in organisms which lack either or both of asparaginyl-tRNA or glutaminyl-tRNA synthetases. The reaction takes place in the presence of glutamine and ATP through an activated phospho-Asp-tRNA(Asn) or phospho-Glu-tRNA(Gln). This Lactococcus lactis subsp. cremoris (strain SK11) protein is Aspartyl/glutamyl-tRNA(Asn/Gln) amidotransferase subunit C.